Consider the following 1972-residue polypeptide: Myosin-11 (1972 aa).

Phosphoserine occurs at positions 8, 23, and 40. Residues 31 to 81 form the Myosin N-terminal SH3-like domain; sequence VAKKLVWVPSEKQGFEAASIKEEKGDEVVVELVENGKKVTVGKDDIQKMNP. Positions 85–783 constitute a Myosin motor domain; sequence SKVEDMAELT…VLAHLEEERD (699 aa). Lys-129 bears the N6,N6,N6-trimethyllysine mark. 178-185 contributes to the ATP binding site; it reads GESGAGKT. 2 actin-binding regions span residues 661 to 683 and 762 to 776; these read LGKL…IPNH and RIGQ…GVLA. An IQ domain is found at 786–815; sequence ITDVIMAFQAMCRGYLARKAFTKRQQQLTA. Residues 844–1934 are a coiled coil; it reads LLQVTRQEEE…KSKLRRGNEA (1091 aa). Thr-1177 is modified (phosphothreonine). Ser-1684 and Ser-1722 each carry phosphoserine. A compositionally biased stretch (polar residues) spans 1771–1788; that stretch reads NELATERSTAQKNESARQ. 2 disordered regions span residues 1771 to 1797 and 1867 to 1972; these read NELA…NKEL and QYKE…KASE. The span at 1867–1876 shows a compositional bias: basic and acidic residues; the sequence is QYKEQAEKGN. The segment at 1935 to 1972 is C-terminal; that stretch reads SFVPSRRAGGRRVIENTDGSEEEMDARDSDFNGTKASE. At Thr-1951 the chain carries Phosphothreonine. Phosphoserine occurs at positions 1954 and 1971.

The protein belongs to the TRAFAC class myosin-kinesin ATPase superfamily. Myosin family. As to quaternary structure, muscle myosin is a hexameric protein that consists of 2 heavy chain subunits (MHC), 2 alkali light chain subunits (MLC) and 2 regulatory light chain subunits (MLC-2).

It is found in the melanosome. The protein localises to the cytoplasm. The protein resides in the myofibril. Functionally, muscle contraction. This is Myosin-11 (Myh11) from Mus musculus (Mouse).